Consider the following 209-residue polypeptide: 8-oxoguanine DNA glycosylase/AP lyase (209 aa).

Catalysis depends on residues K131 and D149.

The protein belongs to the type-2 OGG1 family.

It carries out the reaction 2'-deoxyribonucleotide-(2'-deoxyribose 5'-phosphate)-2'-deoxyribonucleotide-DNA = a 3'-end 2'-deoxyribonucleotide-(2,3-dehydro-2,3-deoxyribose 5'-phosphate)-DNA + a 5'-end 5'-phospho-2'-deoxyribonucleoside-DNA + H(+). Its function is as follows. Catalyzes the excision of an oxidatively damaged form of guanine (7,8-dihydro-8-oxoguanine = 8-oxoG) from DNA. Also cleaves the DNA backbone at apurinic/apyrimidinic sites (AP sites). The chain is 8-oxoguanine DNA glycosylase/AP lyase from Korarchaeum cryptofilum (strain OPF8).